A 336-amino-acid polypeptide reads, in one-letter code: uncharacterized protein (336 aa).

Disordered regions lie at residues 29 to 93 (GGVS…HSGA) and 116 to 147 (LQER…GVTG). Polar residues-rich tracts occupy residues 70–82 (SGGS…TSTA) and 125–141 (PWRT…SQPH).

This is an uncharacterized protein from Bos taurus (Bovine).